Consider the following 893-residue polypeptide: Probable ion channel CASTOR (893 aa).

The tract at residues 1–94 is disordered; it reads MPLDPDSSPA…APRRRDPRYA (94 aa). Pro residues predominate over residues 65–85; the sequence is PLPPPEQQKQQQPPPTTPPPA. A helical membrane pass occupies residues 132-152; it reads TLRWSGMVSVAAIVLCFSSLV. Residues 156–178 adopt a coiled-coil conformation; it reads SSLHDQVHHLKAQLAEATTKLQS. 3 consecutive transmembrane segments (helical) span residues 210-230, 266-286, and 318-338; these read LLLS…MDLF, LVLL…LYGV, and LVSV…LGLV. 2 RCK N-terminal domains span residues 359-500 and 619-792; these read QSHT…ETVV and PERI…DYVL. Positions 389–415 form a coiled coil; the sequence is TIVVMAEKDKEEMEADIAKMEFDLKGT.

This sequence belongs to the castor/pollux (TC 1.A.1.23) family. As to expression, expressed in roots, leaves, stems and panicles.

The protein localises to the nucleus membrane. Required for mycorrhizal symbiosis. This is Probable ion channel CASTOR from Oryza sativa subsp. japonica (Rice).